Reading from the N-terminus, the 313-residue chain is GMP synthase [glutamine-hydrolyzing] subunit B (313 aa).

A GMPS ATP-PPase domain is found at 6 to 190; the sequence is KVWEKFIEEK…LGLPEKIYNR (185 aa). 33–39 contributes to the ATP binding site; that stretch reads SGGVDSS.

As to quaternary structure, heterodimer composed of a glutamine amidotransferase subunit (A) and a GMP-binding subunit (B).

It carries out the reaction XMP + L-glutamine + ATP + H2O = GMP + L-glutamate + AMP + diphosphate + 2 H(+). Its pathway is purine metabolism; GMP biosynthesis; GMP from XMP (L-Gln route): step 1/1. In terms of biological role, catalyzes the synthesis of GMP from XMP. In Pyrococcus furiosus (strain ATCC 43587 / DSM 3638 / JCM 8422 / Vc1), this protein is GMP synthase [glutamine-hydrolyzing] subunit B (guaAB).